Here is a 277-residue protein sequence, read N- to C-terminus: Sulfur carrier protein FdhD (277 aa).

Cys121 functions as the Cysteine persulfide intermediate in the catalytic mechanism. 260 to 265 (FCKPGR) is a Mo-bis(molybdopterin guanine dinucleotide) binding site.

Belongs to the FdhD family.

It localises to the cytoplasm. Its function is as follows. Required for formate dehydrogenase (FDH) activity. Acts as a sulfur carrier protein that transfers sulfur from IscS to the molybdenum cofactor prior to its insertion into FDH. The protein is Sulfur carrier protein FdhD of Escherichia coli O8 (strain IAI1).